Consider the following 3149-residue polypeptide: Large tegument protein deneddylase (3149 aa).

Positions 1–13 (MSNGDWGQSQRTR) are enriched in polar residues. A disordered region spans residues 1–30 (MSNGDWGQSQRTRGTGPVRGIRTMDVNAPG). The interval 1 to 268 (MSNGDWGQSQ…YEANGSGFDL (268 aa)) is deubiquitination activity. The 218-residue stretch at 41-258 (LGTASCNQAH…MLEHYGVYDF (218 aa)) folds into the Peptidase C76 domain. Residues cysteine 61, aspartate 193, and histidine 195 contribute to the active site. The interval 319–341 (PAARYSPAKTNSPPSSPASAAPA) is disordered. Tandem repeats lie at residues 335-339 (PASAA), 340-344 (PASAA), 345-349 (PASAA), 350-354 (PASAA), 355-359 (PASAA), 360-364 (PASAA), 365-369 (PASAA), and 370-374 (PASAA). Positions 335-374 (PASAAPASAAPASAAPASAAPASAAPASAAPASAAPASAA) are 8 X 5 AA repeats of P-A-S-A-A. 8 disordered regions span residues 382–656 (FIPI…GSGL), 901–923 (LLSG…SIYR), 1143–1166 (APIS…TPPL), 1412–1434 (GRKE…RARE), 1644–1677 (PEAT…SALW), 2583–2839 (GLVS…PTAV), 2852–2981 (AAAS…PGAR), and 2995–3019 (QTYT…KCKD). Positions 462–483 (LPPPVIPIPHQSPPASPTPHPA) are enriched in pro residues. Composition is skewed to low complexity over residues 509–536 (AAPS…TTTL) and 544–564 (QPPQ…QPTP). An interaction with inner tegument protein region spans residues 554–584 (SPLLPQQQPTPSAAPAPSPLLPQQQPPPSAA). Positions 565 to 609 (SAAPAPSPLLPQQQPPPSAARAPSPLPPQQQPLPSATPAPPPAQQ) are enriched in pro residues. A compositionally biased stretch (low complexity) spans 1143–1155 (APISPASPSATPA). A compositionally biased stretch (polar residues) spans 2592 to 2603 (SADNTPASSDRL). Residues 2711-2720 (QPAPQQPPSS) show a composition bias toward pro residues. 2 stretches are compositionally biased toward polar residues: residues 2734 to 2745 (SPHSTPSTASGS) and 2784 to 2804 (SAAS…SSQD). Positions 2812–2827 (MQREKKQQGGREEAAE) are enriched in basic and acidic residues. A compositionally biased stretch (low complexity) spans 2874-2885 (APALGSGLAAPA).

Belongs to the herpesviridae large tegument protein family. Interacts with host CUL1 and CUL4A; these interactions inhibit the E3 ligase activity of cullins. Interacts with inner tegument protein. Interacts with capsid vertex specific component CVC2. Interacts with the major capsid protein/MCP. Interacts with host TRIM25 and YWHAZ.

The protein resides in the virion tegument. It is found in the host cytoplasm. The protein localises to the host nucleus. The enzyme catalyses Thiol-dependent hydrolysis of ester, thioester, amide, peptide and isopeptide bonds formed by the C-terminal Gly of ubiquitin (a 76-residue protein attached to proteins as an intracellular targeting signal).. Its function is as follows. Large tegument protein that plays multiple roles in the viral cycle. During viral entry, remains associated with the capsid while most of the tegument is detached and participates in the capsid transport toward the host nucleus. Plays a role in the routing of the capsid at the nuclear pore complex and subsequent uncoating. Within the host nucleus, acts as a deneddylase and promotes the degradation of nuclear CRLs (cullin-RING ubiquitin ligases) and thereby stabilizes nuclear CRL substrates, while cytoplasmic CRLs remain unaffected. These modifications prevent host cell cycle S-phase progression and create a favorable environment allowing efficient viral genome replication. Participates later in the secondary envelopment of capsids. Indeed, plays a linker role for the association of the outer viral tegument to the capsids together with the inner tegument protein. Counteracts host TLR-mediated NF-kappa-B activation through both MYD88 and TICAM1-dependent pathways by interfering with 'Lys-63'- and 'Lys-48'-linked ubiquitination of signaling intermediates such as TRAF6 and IKBKG. Inhibits type I interferon production by forming a tri-molecular complex with host TRIM25 and 14-3-3 thereby promoting TRIM25 autoubiquitination and sequestration of the ligase into inactive protein aggregates. In turn, host RIGI is recruited to the complex but ubiquitination is severely impaired leading to inhibition of the pathway. Also catalyzes the removal of 'Lys-48'- and 'Lys-63'-linked ubiquitin chains on host TBK1 and STING1 suppressing cGAS-STING signaling in addition to the RIGI-MAVS pathway. Inhibits selective autophagy by deubiquitinating host SQSTM1. In turn, decreased SQSTM1 ubiquitination fails to recruit LC3 to SQSTM1-positive aggregates. In the host nucleus, deubiquitinates topoisomerase II subunits TOP2A and TOP2B thereby stabilizing SUMOylated TOP2 which halts the DNA damage response to TOP2-induced double strand DNA breaks and promotes cell survival. The polypeptide is Large tegument protein deneddylase (Epstein-Barr virus (strain B95-8) (HHV-4)).